Consider the following 310-residue polypeptide: MLPVVVVHGGAGHIPKERTEESTIGVKEAARTGYAILQRGGSAVDAVVEAVALMETNPRFNAGRGSVLNIKGEVEMDALVMDGRTLDSGAVSAVRRIANPVQLARLVMEKTKHLCLTAEGASKFARSMGVPEVPEESLITDYAKMRWKKNLEPDANPVECQMGKMGTVGAVAVDMDGNIACATSTGGMINKMEGRVGDTPCVGCGGYADNKIGAVSPTGHGEAIMKVTLSRLVLFHMEQGKTPEEASDLALAYMKERVDGLGGVVVVDHNGTWAARFSSLQMSWAAAQQGKLHFGLFHGDHFTEPVEEHT.

Catalysis depends on threonine 167, which acts as the Nucleophile. Substrate-binding positions include 195–198 (RVGD) and 218–221 (TGHG).

It belongs to the Ntn-hydrolase family. As to quaternary structure, heterodimer of an alpha and beta chain produced by autocleavage. In terms of processing, cleaved into an alpha and beta chain by autocatalysis; this activates the enzyme. The N-terminal residue of the beta subunit is responsible for the nucleophile hydrolase activity.

The protein localises to the cytoplasm. It catalyses the reaction L-asparagine + H2O = L-aspartate + NH4(+). The enzyme catalyses Cleavage of a beta-linked Asp residue from the N-terminus of a polypeptide.. Has both L-asparaginase and beta-aspartyl peptidase activity. Does not have aspartylglucosaminidase activity and is inactive toward GlcNAc-L-Asn. Likewise, has no activity toward glutamine. This is Isoaspartyl peptidase/L-asparaginase (asrgl1) from Danio rerio (Zebrafish).